A 556-amino-acid polypeptide reads, in one-letter code: Polypeptide N-acetylgalactosaminyltransferase 13 (556 aa).

Over 1–4 the chain is Cytoplasmic; sequence MRRF. The helical; Signal-anchor for type II membrane protein transmembrane segment at 5-27 threads the bilayer; the sequence is VYCKVVLATSLMWVLVDVFLLLY. Over 28–556 the chain is Lumenal; that stretch reads FSECNKCDDK…WLLRNMTLGT (529 aa). N-linked (GlcNAc...) asparagine glycans are attached at residues asparagine 94 and asparagine 116. Disulfide bonds link cysteine 105-cysteine 338, cysteine 329-cysteine 407, cysteine 441-cysteine 458, cysteine 481-cysteine 496, and cysteine 522-cysteine 539. A catalytic subdomain A region spans residues 114 to 224; it reads LPNTSVVIVF…LGWLEPLLAR (111 aa). The substrate site is built by aspartate 155 and arginine 185. 2 residues coordinate Mn(2+): aspartate 208 and histidine 210. A catalytic subdomain B region spans residues 284–346; sequence PVRTPTMAGG…TCSHVGHVFR (63 aa). Substrate is bound at residue tryptophan 315. A Mn(2+)-binding site is contributed by histidine 343. Substrate-binding residues include arginine 346 and tyrosine 351. The Ricin B-type lectin domain maps to 428–550; the sequence is YSLGEIRNVE…GSRSQQWLLR (123 aa). N-linked (GlcNAc...) asparagine glycosylation occurs at asparagine 551.

Belongs to the glycosyltransferase 2 family. GalNAc-T subfamily. Mn(2+) serves as cofactor. Specifically expressed in neuronal cells. Not expressed in glial cells such as astrocytes. Expressed at low level.

The protein resides in the golgi apparatus membrane. The enzyme catalyses L-seryl-[protein] + UDP-N-acetyl-alpha-D-galactosamine = a 3-O-[N-acetyl-alpha-D-galactosaminyl]-L-seryl-[protein] + UDP + H(+). It carries out the reaction L-threonyl-[protein] + UDP-N-acetyl-alpha-D-galactosamine = a 3-O-[N-acetyl-alpha-D-galactosaminyl]-L-threonyl-[protein] + UDP + H(+). It functions in the pathway protein modification; protein glycosylation. In terms of biological role, catalyzes the initial reaction in O-linked oligosaccharide biosynthesis, the transfer of an N-acetyl-D-galactosamine (GalNAc) residue from UDP-GalNAc to a serine or threonine residue on the protein receptor. Generates GalNAc-O-Ser/Thr structure also known as Tn antigen, which itself is immunogenic but also serves as a precursor for the synthesis of different mucin-type O-glycan core structures. Contributes to the synthesis of O-linked glycans on mucins and proteoglycans of the central nervous system. Can glycosylate both unmodified peptides and glycopeptides that already contain an O-linked GalNAc sugar. Transfers GalNAc to Thr-/Ser-rich tandem repeats GTTPSPVPTTSTTSAP of MUC5AC. Transfers GalNAc to three consecutive serine/threonine residues on SDC3 forming a triplet-Tn epitope expressed in Purkinje cells of the developing brain. May promote neurogenesis through glycosylation and stabilization of PDPN. The protein is Polypeptide N-acetylgalactosaminyltransferase 13 (Galnt13) of Mus musculus (Mouse).